We begin with the raw amino-acid sequence, 200 residues long: NADH-quinone oxidoreductase subunit C (200 aa).

This sequence belongs to the complex I 30 kDa subunit family. NDH-1 is composed of 14 different subunits. Subunits NuoB, C, D, E, F, and G constitute the peripheral sector of the complex.

The protein resides in the cell inner membrane. It catalyses the reaction a quinone + NADH + 5 H(+)(in) = a quinol + NAD(+) + 4 H(+)(out). Its function is as follows. NDH-1 shuttles electrons from NADH, via FMN and iron-sulfur (Fe-S) centers, to quinones in the respiratory chain. The immediate electron acceptor for the enzyme in this species is believed to be ubiquinone. Couples the redox reaction to proton translocation (for every two electrons transferred, four hydrogen ions are translocated across the cytoplasmic membrane), and thus conserves the redox energy in a proton gradient. This is NADH-quinone oxidoreductase subunit C from Paraburkholderia xenovorans (strain LB400).